We begin with the raw amino-acid sequence, 409 residues long: Elongation factor Tu (409 aa).

The region spanning 10–214 (KPHVNIGTIG…EVDAYIPEPE (205 aa)) is the tr-type G domain. The interval 19 to 26 (GHVDHGKT) is G1. 19–26 (GHVDHGKT) lines the GTP pocket. Threonine 26 contributes to the Mg(2+) binding site. The tract at residues 60–64 (GITIN) is G2. The G3 stretch occupies residues 81 to 84 (DCPG). GTP contacts are provided by residues 81 to 85 (DCPGH) and 136 to 139 (NKQD). The interval 136 to 139 (NKQD) is G4. Positions 174 to 176 (SAL) are G5.

Belongs to the TRAFAC class translation factor GTPase superfamily. Classic translation factor GTPase family. EF-Tu/EF-1A subfamily. In terms of assembly, monomer.

Its subcellular location is the cytoplasm. The enzyme catalyses GTP + H2O = GDP + phosphate + H(+). In terms of biological role, GTP hydrolase that promotes the GTP-dependent binding of aminoacyl-tRNA to the A-site of ribosomes during protein biosynthesis. The sequence is that of Elongation factor Tu from Rippkaea orientalis (strain PCC 8801 / RF-1) (Cyanothece sp. (strain PCC 8801)).